Reading from the N-terminus, the 320-residue chain is Transcription termination/antitermination protein NusG (320 aa).

It belongs to the NusG family.

Functionally, participates in transcription elongation, termination and antitermination. This Mycoplasma pneumoniae (strain ATCC 29342 / M129 / Subtype 1) (Mycoplasmoides pneumoniae) protein is Transcription termination/antitermination protein NusG.